The following is an 86-amino-acid chain: UPF0297 protein CA_C1679 (86 aa).

This sequence belongs to the UPF0297 family.

This Clostridium acetobutylicum (strain ATCC 824 / DSM 792 / JCM 1419 / IAM 19013 / LMG 5710 / NBRC 13948 / NRRL B-527 / VKM B-1787 / 2291 / W) protein is UPF0297 protein CA_C1679.